The chain runs to 576 residues: Calmodulin-binding protein 60 B (576 aa).

The disordered stretch occupies residues methionine 1–proline 25. The tract at residues methionine 1–arginine 80 is calmodulin-binding. A compositionally biased stretch (basic and acidic residues) spans proline 8–proline 25. Residues aspartate 150–asparagine 273 form a DNA-binding region.

The protein belongs to the plant ACBP60 protein family. (Microbial infection) Interacts with V.dahliae SCP41. As to quaternary structure, interacts with calmodulin (CaM).

It localises to the nucleus. Transcription activator that binds DNA in a sequence-specific manner, likely 5'-GAAATTTTGG-3', to promote the expression of target genes. Required for pathogen resistance. The protein is Calmodulin-binding protein 60 B of Gossypium hirsutum (Upland cotton).